A 95-amino-acid polypeptide reads, in one-letter code: Aspartyl/glutamyl-tRNA(Asn/Gln) amidotransferase subunit C (95 aa).

The protein belongs to the GatC family. Heterotrimer of A, B and C subunits.

It catalyses the reaction L-glutamyl-tRNA(Gln) + L-glutamine + ATP + H2O = L-glutaminyl-tRNA(Gln) + L-glutamate + ADP + phosphate + H(+). It carries out the reaction L-aspartyl-tRNA(Asn) + L-glutamine + ATP + H2O = L-asparaginyl-tRNA(Asn) + L-glutamate + ADP + phosphate + 2 H(+). Allows the formation of correctly charged Asn-tRNA(Asn) or Gln-tRNA(Gln) through the transamidation of misacylated Asp-tRNA(Asn) or Glu-tRNA(Gln) in organisms which lack either or both of asparaginyl-tRNA or glutaminyl-tRNA synthetases. The reaction takes place in the presence of glutamine and ATP through an activated phospho-Asp-tRNA(Asn) or phospho-Glu-tRNA(Gln). This chain is Aspartyl/glutamyl-tRNA(Asn/Gln) amidotransferase subunit C, found in Sinorhizobium fredii (strain NBRC 101917 / NGR234).